The primary structure comprises 413 residues: Gamma-glutamyl phosphate reductase (413 aa).

This sequence belongs to the gamma-glutamyl phosphate reductase family.

It is found in the cytoplasm. It catalyses the reaction L-glutamate 5-semialdehyde + phosphate + NADP(+) = L-glutamyl 5-phosphate + NADPH + H(+). The protein operates within amino-acid biosynthesis; L-proline biosynthesis; L-glutamate 5-semialdehyde from L-glutamate: step 2/2. Catalyzes the NADPH-dependent reduction of L-glutamate 5-phosphate into L-glutamate 5-semialdehyde and phosphate. The product spontaneously undergoes cyclization to form 1-pyrroline-5-carboxylate. The sequence is that of Gamma-glutamyl phosphate reductase from Rhodococcus jostii (strain RHA1).